The primary structure comprises 30 residues: Ranatuerin-2OK (30 aa).

Residues C23 and C30 are joined by a disulfide bond.

As to expression, expressed by the skin glands.

Its subcellular location is the secreted. Antimicrobial peptide. Active against Gram-negative bacterium E.coli (MIC=12.5 uM) and against Gram-positive bacterium S.aureus (MIC=50 uM). The sequence is that of Ranatuerin-2OK from Nidirana okinavana (Kampira Falls frog).